The primary structure comprises 168 residues: Lipoprotein signal peptidase (168 aa).

4 helical membrane passes run W15–D35, V47–S67, W75–L95, and A107–V127. Catalysis depends on residues D128 and D146. The helical transmembrane segment at A141–F161 threads the bilayer.

Belongs to the peptidase A8 family.

It localises to the cell inner membrane. It catalyses the reaction Release of signal peptides from bacterial membrane prolipoproteins. Hydrolyzes -Xaa-Yaa-Zaa-|-(S,diacylglyceryl)Cys-, in which Xaa is hydrophobic (preferably Leu), and Yaa (Ala or Ser) and Zaa (Gly or Ala) have small, neutral side chains.. The protein operates within protein modification; lipoprotein biosynthesis (signal peptide cleavage). Its function is as follows. This protein specifically catalyzes the removal of signal peptides from prolipoproteins. This is Lipoprotein signal peptidase from Vibrio campbellii (strain ATCC BAA-1116).